The chain runs to 505 residues: Protein disulfide-isomerase A3 (505 aa).

The N-terminal stretch at 1–24 is a signal peptide; the sequence is MRLRRLALFPGVALLLAAARLAAA. Positions 25-133 constitute a Thioredoxin 1 domain; that stretch reads SDVLELTDDN…IVSHLKKQAG (109 aa). Active-site nucleophile residues include C57 and C60. The cysteines at positions 57 and 60 are disulfide-linked. K61 is subject to N6-methyllysine. C85 and C92 are joined by a disulfide. K129 is modified (N6-succinyllysine). At K152 the chain carries N6-acetyllysine. K218 is modified (N6-succinyllysine). K252 is modified (N6-acetyllysine). T319 is modified (phosphothreonine). A Thioredoxin 2 domain is found at 343 to 485; the sequence is SRDGKALERF…FISYLQREAT (143 aa). The residue at position 362 (K362) is an N6-acetyllysine. Residues C406 and C409 each act as nucleophile in the active site. C406 and C409 are oxidised to a cystine. The disordered stretch occupies residues 484-505; it reads ATNPPVIQEEKPKKKKKAQEDL. The span at 491–505 shows a compositional bias: basic and acidic residues; sequence QEEKPKKKKKAQEDL. An N6-acetyllysine modification is found at K494. The short motif at 502 to 505 is the Prevents secretion from ER element; that stretch reads QEDL.

In terms of assembly, part of the major histocompatibility complex class I (MHC I) peptide loading complex composed of TAP1, TAP2, B2M, MHC heavy chain, TAPBP, PDIA3, and CALR. Interacts with ERP27 and CANX. Interacts with SERPINA2 and with the S and Z variants of SERPINA1. Interacts with ATP2A2. In terms of processing, within the major histocompatibility complex class I (MHC I) peptide loading complex forms reversible disulfide-linked heterodimers with TAPBP as part of its protein folding chaperone activity. This is essential to assist the dynamic assembly of the MHC I complex with high affinity antigens in the endoplasmic reticulum. Post-translationally, phosphorylated. As to expression, detected in the flagellum and head region of spermatozoa (at protein level). Expressed in liver, stomach and colon (at protein level). Expressed in gastric parietal cells and chief cells (at protein level).

It localises to the endoplasmic reticulum. Its subcellular location is the endoplasmic reticulum lumen. The protein resides in the melanosome. The catalysed reaction is Catalyzes the rearrangement of -S-S- bonds in proteins.. Association with calcitriol does not affect its enzymatic activity. Functionally, protein disulfide isomerase that catalyzes the formation, isomerization, and reduction or oxidation of disulfide bonds in client proteins and functions as a protein folding chaperone. Core component of the major histocompatibility complex class I (MHC I) peptide loading complex where it functions as an essential folding chaperone for TAPBP. Through TAPBP, assists the dynamic assembly of the MHC I complex with high affinity antigens in the endoplasmic reticulum. Therefore, plays a crucial role in the presentation of antigens to cytotoxic T cells in adaptive immunity. The sequence is that of Protein disulfide-isomerase A3 from Homo sapiens (Human).